A 127-amino-acid chain; its full sequence is uncharacterized protein (127 aa).

The 127-residue stretch at 1 to 127 (MKIVVTSIFV…CGNLIQIVQK (127 aa)) folds into the VOC domain.

The protein belongs to the glyoxalase I family.

This is an uncharacterized protein from Bacillus subtilis (strain 168).